The primary structure comprises 366 residues: Transmembrane protein 26 (366 aa).

Helical transmembrane passes span 4–24 (LVLLKALVTRLLFLLHSLVAV), 36–56 (YWLLALLNLLLVLETVLTLKF), and 64–84 (WLSPAIFVYLVNIMPSLWLLE). Residue asparagine 110 is glycosylated (N-linked (GlcNAc...) asparagine). A run of 5 helical transmembrane segments spans residues 138 to 158 (MVCEPVWTLGLHQTLLLILII), 176 to 196 (ELLLMFVGTAADILEFTTETL), 208 to 228 (VSGILVVWTWSMLQFPLDLAV), 258 to 278 (IGLSFFIQDGPFLVVRLVLMI), and 282 to 302 (VINHMLVFFAVKNSLVMALHF). Positions 319-329 (HPESPKPEHSG) are enriched in basic and acidic residues. The tract at residues 319–366 (HPESPKPEHSGPDQPSESGPSEWEDASPEALPLRTSPVTSEESYPTTP) is disordered. Residues 354–366 (SPVTSEESYPTTP) are compositionally biased toward polar residues.

The protein resides in the membrane. This is Transmembrane protein 26 (Tmem26) from Mus musculus (Mouse).